Consider the following 120-residue polypeptide: ESAT-6-like protein EsxQ (120 aa).

Belongs to the WXG100 family. ESAT-6 subfamily.

Its subcellular location is the secreted. This chain is ESAT-6-like protein EsxQ, found in Mycobacterium bovis (strain ATCC BAA-935 / AF2122/97).